The following is a 619-amino-acid chain: 1-deoxy-D-xylulose-5-phosphate synthase (619 aa).

Thiamine diphosphate-binding positions include H76 and 117 to 119; that span reads AHS. D148 lines the Mg(2+) pocket. Thiamine diphosphate contacts are provided by residues 149 to 150, N177, Y284, and E366; that span reads GA. N177 is a Mg(2+) binding site.

The protein belongs to the transketolase family. DXPS subfamily. Homodimer. The cofactor is Mg(2+). Thiamine diphosphate is required as a cofactor.

It carries out the reaction D-glyceraldehyde 3-phosphate + pyruvate + H(+) = 1-deoxy-D-xylulose 5-phosphate + CO2. The protein operates within metabolic intermediate biosynthesis; 1-deoxy-D-xylulose 5-phosphate biosynthesis; 1-deoxy-D-xylulose 5-phosphate from D-glyceraldehyde 3-phosphate and pyruvate: step 1/1. Catalyzes the acyloin condensation reaction between C atoms 2 and 3 of pyruvate and glyceraldehyde 3-phosphate to yield 1-deoxy-D-xylulose-5-phosphate (DXP). This Azoarcus sp. (strain BH72) protein is 1-deoxy-D-xylulose-5-phosphate synthase.